The chain runs to 359 residues: DNA polymerase IV (359 aa).

A UmuC domain is found at 7-188 (IIHIDMDAFY…LPIGKFFGVG (182 aa)). Mg(2+) is bound by residues aspartate 11 and aspartate 106. Glutamate 107 is an active-site residue.

This sequence belongs to the DNA polymerase type-Y family. As to quaternary structure, monomer. The cofactor is Mg(2+).

It localises to the cytoplasm. It catalyses the reaction DNA(n) + a 2'-deoxyribonucleoside 5'-triphosphate = DNA(n+1) + diphosphate. Its function is as follows. Poorly processive, error-prone DNA polymerase involved in untargeted mutagenesis. Copies undamaged DNA at stalled replication forks, which arise in vivo from mismatched or misaligned primer ends. These misaligned primers can be extended by PolIV. Exhibits no 3'-5' exonuclease (proofreading) activity. May be involved in translesional synthesis, in conjunction with the beta clamp from PolIII. This chain is DNA polymerase IV, found in Clostridium perfringens (strain 13 / Type A).